Consider the following 27-residue polypeptide: Cupiennin-3a (27 aa).

Glu27 carries the glutamic acid 1-amide modification.

As to expression, expressed by the venom gland.

The protein resides in the secreted. This Cupiennius salei (American wandering spider) protein is Cupiennin-3a.